A 395-amino-acid polypeptide reads, in one-letter code: Methylthioribose-1-phosphate isomerase (395 aa).

The active-site Proton donor is the aspartate 258.

The protein belongs to the eIF-2B alpha/beta/delta subunits family. MtnA subfamily.

Its subcellular location is the cytoplasm. The protein resides in the nucleus. It carries out the reaction 5-(methylsulfanyl)-alpha-D-ribose 1-phosphate = 5-(methylsulfanyl)-D-ribulose 1-phosphate. The protein operates within amino-acid biosynthesis; L-methionine biosynthesis via salvage pathway; L-methionine from S-methyl-5-thio-alpha-D-ribose 1-phosphate: step 1/6. Catalyzes the interconversion of methylthioribose-1-phosphate (MTR-1-P) into methylthioribulose-1-phosphate (MTRu-1-P). This is Methylthioribose-1-phosphate isomerase from Podospora anserina (strain S / ATCC MYA-4624 / DSM 980 / FGSC 10383) (Pleurage anserina).